A 228-amino-acid chain; its full sequence is PKHD-type hydroxylase Rmet_0838 (228 aa).

A Fe2OG dioxygenase domain is found at 78–179 (RVLPPMFNRY…RWASFFWAQS (102 aa)). 3 residues coordinate Fe cation: His-96, Asp-98, and His-160. Position 170 (Arg-170) interacts with 2-oxoglutarate.

Requires Fe(2+) as cofactor. The cofactor is L-ascorbate.

This is PKHD-type hydroxylase Rmet_0838 from Cupriavidus metallidurans (strain ATCC 43123 / DSM 2839 / NBRC 102507 / CH34) (Ralstonia metallidurans).